The chain runs to 899 residues: Core protein VP3 (899 aa).

The tract at residues 1 to 22 (MAEPPDAATPKTSPYLKGDELS) is disordered.

This sequence belongs to the orbivirus VP3 family.

It localises to the virion. The VP3 protein is one of the five proteins (with VP1, VP4, VP6 and VP7) which form the inner capsid of the virus. The sequence is that of Core protein VP3 (Segment-3) from Antilocapra americana (Pronghorn).